Here is a 239-residue protein sequence, read N- to C-terminus: UDP-2,3-diacylglucosamine hydrolase (239 aa).

Mn(2+) is bound by residues aspartate 8, histidine 10, aspartate 41, asparagine 78, and histidine 113. Residue 78–79 (NR) coordinates substrate. Residues aspartate 121, serine 159, asparagine 163, lysine 166, and histidine 194 each contribute to the substrate site. Mn(2+)-binding residues include histidine 194 and histidine 196.

This sequence belongs to the LpxH family. It depends on Mn(2+) as a cofactor.

The protein localises to the cell inner membrane. The enzyme catalyses UDP-2-N,3-O-bis[(3R)-3-hydroxytetradecanoyl]-alpha-D-glucosamine + H2O = 2-N,3-O-bis[(3R)-3-hydroxytetradecanoyl]-alpha-D-glucosaminyl 1-phosphate + UMP + 2 H(+). Its pathway is glycolipid biosynthesis; lipid IV(A) biosynthesis; lipid IV(A) from (3R)-3-hydroxytetradecanoyl-[acyl-carrier-protein] and UDP-N-acetyl-alpha-D-glucosamine: step 4/6. Functionally, hydrolyzes the pyrophosphate bond of UDP-2,3-diacylglucosamine to yield 2,3-diacylglucosamine 1-phosphate (lipid X) and UMP by catalyzing the attack of water at the alpha-P atom. Involved in the biosynthesis of lipid A, a phosphorylated glycolipid that anchors the lipopolysaccharide to the outer membrane of the cell. This is UDP-2,3-diacylglucosamine hydrolase from Shewanella oneidensis (strain ATCC 700550 / JCM 31522 / CIP 106686 / LMG 19005 / NCIMB 14063 / MR-1).